The sequence spans 285 residues: Dioxygenase andF (285 aa).

Residues H128, D130, and H205 each contribute to the Fe cation site.

This sequence belongs to the PhyH family. In terms of assembly, homodimer. The cofactor is Fe cation.

It participates in secondary metabolite biosynthesis; terpenoid biosynthesis. Dioxygenase; part of the gene cluster that mediates the biosynthesis of anditomin, a fungal meroterpenoid. The first step of the pathway is the synthesis of 3,5-dimethylorsellinic acid (DMOA) by the polyketide synthase andM. DMOA is then converted to the phthalide compound 5,7-dihydroxy-4,6-dimethylphthalide (DHDMP) by the cytochrome P450 monooxygenase andK, which is further prenylated by the prenyltransferase andD to yield farnesyl-DHDMP. Further epoxidation by the FAD-dependent monooxygenase andE leads to epoxyfarnesyl-DHDMP. The next step involves the terpene cyclase andB that converts epoxyfarnesyl-DHDMP into preandiloid A through opening of the epoxide ring followed by the cyclization of the farnesyl moiety. Preandiloid A is in turn oxidized at the C-3 hydroxyl group to yield preandiloid B by the dehydrogenase andC. The dioxygenase andA is solely responsible for the dehydrogenation of preandiloid B leading to the enone preandiloid C, as well as for the intriguing structural rearrangement to generate the bicyclo[2.2.2]octane core, transforming preandiloid C into andiconin. FAD-binding monooxygenase andJ then produces andilesin D which is reduced by dehydrogenase andI to yield andilesin A. Action of acetyltransferase andG followed by a spontaneous acetate elimination leads then to andilesin B, which is in turn substrate of the short chain dehydrogenase andH to yield andilesin C. Finally, the dioxygenase andF catalyzes the transformation of andilesin C to anditomin. This chain is Dioxygenase andF, found in Emericella variicolor (Aspergillus stellatus).